The primary structure comprises 397 residues: Acetate kinase (397 aa).

Position 8 (N8) interacts with Mg(2+). Residue K15 participates in ATP binding. Residue R89 coordinates substrate. D146 (proton donor/acceptor) is an active-site residue. ATP is bound by residues 206 to 210 (HLGNG), 281 to 283 (DLR), and 329 to 333 (GVGEN). E382 lines the Mg(2+) pocket.

The protein belongs to the acetokinase family. Homodimer. Requires Mg(2+) as cofactor. Mn(2+) is required as a cofactor.

It is found in the cytoplasm. The catalysed reaction is acetate + ATP = acetyl phosphate + ADP. It functions in the pathway metabolic intermediate biosynthesis; acetyl-CoA biosynthesis; acetyl-CoA from acetate: step 1/2. Its function is as follows. Catalyzes the formation of acetyl phosphate from acetate and ATP. Can also catalyze the reverse reaction. The polypeptide is Acetate kinase (Bacillus anthracis).